A 681-amino-acid polypeptide reads, in one-letter code: Sodium/glucose cotransporter 4 (681 aa).

At 1-36 (MSKELAAMGPGASGDGVRTETAPHIALDSRVGLHAY) the chain is on the extracellular side. The chain crosses the membrane as a helical span at residues 37–57 (DISVVVIYFVFVIAVGIWSSI). Over 58-75 (RASRGTIGGYFLAGRSMS) the chain is Cytoplasmic. A helical membrane pass occupies residues 76–98 (WWPIGASLMSSNVGSGLFIGLAG). Residues 99-114 (TGAAGGLAVGGFEWNA) are Extracellular-facing. Residues 115–135 (TWLLLALGWVFVPVYIAAGVV) traverse the membrane as a helical segment. Topologically, residues 136-157 (TMPQYLKKRFGGQRIQVYMSVL) are cytoplasmic. Residues 158 to 178 (SLILYIFTKISTDIFSGALFI) form a helical membrane-spanning segment. At 179–190 (QMALGWNLYLST) the chain is on the extracellular side. A helical membrane pass occupies residues 191–211 (GILLVVTAVYTIAGGLMAVIY). The Cytoplasmic segment spans residues 212-217 (TDALQT). The helical transmembrane segment at 218–238 (VIMVGGALVLMFLGFQDVGWY) threads the bilayer. Over 239–275 (PGLEQRYRQAIPNVTVPNTTCHLPRPDAFHILRDPVS) the chain is Extracellular. Asn-251 carries an N-linked (GlcNAc...) asparagine glycan. A helical membrane pass occupies residues 276-296 (GDIPWPGLIFGLTVLATWCWC). The Cytoplasmic segment spans residues 297–317 (TDQVIVQRSLSAKSLSHAKGG). Residues 318-338 (SVLGGYLKILPMFFIVMPGMI) form a helical membrane-spanning segment. Residues 339 to 383 (SRALFPDEVGCVDPDVCQRICGARVGCSNIAYPKLVMALMPVGLR) are Extracellular-facing. A helical membrane pass occupies residues 384–406 (GLMIAVIMAALMSSLTSIFNSSS). Over 407 to 427 (TLFTIDVWQRFRRKSTEQELM) the chain is Cytoplasmic. A helical membrane pass occupies residues 428-448 (VVGRVFVVFLVVISILWIPII). The Extracellular portion of the chain corresponds to 449–459 (QSSNSGQLFDY). The chain crosses the membrane as a helical span at residues 460–480 (IQAVTSYLAPPITALFLLAIF). Topologically, residues 481-487 (CKRVTEP) are cytoplasmic. The chain crosses the membrane as a helical span at residues 488–508 (GAFWGLVFGLGVGLLRMILEF). Residues 509–530 (SYPAPACGEVDRRPAVLKDFHY) lie on the Extracellular side of the membrane. The chain crosses the membrane as a helical span at residues 531–551 (LYFAILLCGLTAIVIVIVSLC). Topologically, residues 552–660 (TTPIPEEQLT…SIEEEPLWRH (109 aa)) are cytoplasmic. A compositionally biased stretch (basic and acidic residues) spans 579–591 (AHESTPEISERPA). Positions 579–614 (AHESTPEISERPAGECPAGGGAAENSSLGQEQPEAP) are disordered. Ser-604 and Ser-605 each carry phosphoserine. The helical transmembrane segment at 661-681 (VCNINAVLLLAINIFLWGYFA) threads the bilayer.

This sequence belongs to the sodium:solute symporter (SSF) (TC 2.A.21) family. In terms of tissue distribution, expressed in the small intestine, kidney and liver.

Its subcellular location is the cell membrane. It carries out the reaction D-mannose(out) + n Na(+)(out) = D-mannose(in) + n Na(+)(in). In terms of biological role, electrogenic Na(+)-coupled sugar symporter that may play a primary role in D-mannose and possibly D-fructose and D-glucose transport at the plasma membrane. Transporter activity is driven by a transmembrane Na(+) electrochemical gradient set by the Na(+)/K(+) pump. Exclusively recognizes sugar substrates having a pyranose ring with an axial hydroxyl group on carbon 2. The protein is Sodium/glucose cotransporter 4 of Homo sapiens (Human).